A 92-amino-acid chain; its full sequence is MPKLEMMLLVLLILPLSYFSAAGGQVVQGDWRGDGLARYLQRGDRDAQGCQVVTPGSKWGRCCLNRVCGPMCCPASHCYCIYHRGRGHGCSC.

A signal peptide spans 1-24 (MPKLEMMLLVLLILPLSYFSAAGG). Positions 25 to 45 (QVVQGDWRGDGLARYLQRGDR) are excised as a propeptide. Position 55 is a 4-hydroxyproline (proline 55). Disulfide bonds link cysteine 63-cysteine 72, cysteine 68-cysteine 80, cysteine 73-cysteine 90, and cysteine 78-cysteine 92.

Belongs to the conotoxin D superfamily. Hetero-, homo- or pseudo-homodimer (identical sequence, different post-translational modifications). In terms of tissue distribution, expressed by the venom duct.

It is found in the secreted. Alpha-conotoxins act on postsynaptic membranes, they bind to the nicotinic acetylcholine receptors (nAChR) and thus inhibit them. Through its two C-terminal domains, this homodimeric protein would bind to two nAChR allosteric sites, located outside the nAChR C-loop of the principal binding face and at the adjacent binding interface in a clockwise direction. This toxin specifically blocks mammalian neuronal nAChR of the alpha-7/CHRNA7, alpha-3-beta-2/CHRNA3-CHRNB2 and alpha-4-beta-2/CHRNA4-CHRNB2 subtypes. The protein is Alpha-conotoxin-like Mi20.3 of Conus miles (Soldier cone).